Here is a 104-residue protein sequence, read N- to C-terminus: Large ribosomal subunit protein bL28 (104 aa).

It belongs to the bacterial ribosomal protein bL28 family.

In Wolbachia sp. subsp. Brugia malayi (strain TRS), this protein is Large ribosomal subunit protein bL28.